The chain runs to 77 residues: Large ribosomal subunit protein eL14 (77 aa).

This sequence belongs to the eukaryotic ribosomal protein eL14 family.

The chain is Large ribosomal subunit protein eL14 from Methanococcus maripaludis (strain C7 / ATCC BAA-1331).